We begin with the raw amino-acid sequence, 177 residues long: Meiotically up-regulated gene 121 protein (177 aa).

Positions 1-23 (MKGFVVISRFILTLFILITPGLA) are cleaved as a signal peptide. Residue asparagine 121 is glycosylated (N-linked (GlcNAc...) asparagine).

The protein localises to the endoplasmic reticulum. The protein resides in the golgi apparatus. Its function is as follows. Has a role in meiosis. In Schizosaccharomyces pombe (strain 972 / ATCC 24843) (Fission yeast), this protein is Meiotically up-regulated gene 121 protein (mug121).